The following is a 1549-amino-acid chain: Zinc finger MYM-type protein 4 (1549 aa).

A2 bears the N-acetylalanine mark. A disordered region spans residues V83–G108. Positions K97–T106 are enriched in polar residues. T106 carries the phosphothreonine modification. 2 positions are modified to phosphoserine: S109 and S121. Glycyl lysine isopeptide (Lys-Gly) (interchain with G-Cter in SUMO2) cross-links involve residues K139 and K148. S161 carries the post-translational modification Phosphoserine. A Glycyl lysine isopeptide (Lys-Gly) (interchain with G-Cter in SUMO2) cross-link involves residue K195. Phosphoserine is present on S197. Glycyl lysine isopeptide (Lys-Gly) (interchain with G-Cter in SUMO2) cross-links involve residues K201 and K232. S242 carries the phosphoserine modification. K250 is covalently cross-linked (Glycyl lysine isopeptide (Lys-Gly) (interchain with G-Cter in SUMO1); alternate). K250 is covalently cross-linked (Glycyl lysine isopeptide (Lys-Gly) (interchain with G-Cter in SUMO2); alternate). The tract at residues G267–Q291 is disordered. Residues K273, K289, K327, K400, K428, and K430 each participate in a glycyl lysine isopeptide (Lys-Gly) (interchain with G-Cter in SUMO2) cross-link. The span at Q280–T290 shows a compositional bias: polar residues. 9 consecutive MYM-type zinc fingers follow at residues Q362 to V402, K414 to V457, H464 to Q499, K510 to I544, E554 to L592, R600 to G631, F708 to V742, K749 to N788, and E795 to L829. Residues K1035 and K1062 each participate in a glycyl lysine isopeptide (Lys-Gly) (interchain with G-Cter in SUMO2) cross-link. Residues S1065 and S1072 each carry the phosphoserine modification. Residues K1081 and K1128 each participate in a glycyl lysine isopeptide (Lys-Gly) (interchain with G-Cter in SUMO2) cross-link. The segment at D1124–P1185 is disordered. The span at S1125 to T1135 shows a compositional bias: basic and acidic residues. Over residues S1161–S1182 the composition is skewed to basic residues. 2 positions are modified to phosphoserine: S1182 and S1257. A Glycyl lysine isopeptide (Lys-Gly) (interchain with G-Cter in SUMO2) cross-link involves residue K1432. 3 positions are modified to phosphoserine: S1540, S1543, and S1548.

Its function is as follows. Plays a role in the regulation of cell morphology and cytoskeletal organization. This chain is Zinc finger MYM-type protein 4 (Zmym4), found in Mus musculus (Mouse).